The chain runs to 216 residues: Ribose-5-phosphate isomerase A (216 aa).

Substrate is bound by residues 26–29, 79–82, and 92–95; these read TGST, DGAD, and KGGG. Catalysis depends on glutamate 101, which acts as the Proton acceptor. A substrate-binding site is contributed by lysine 119.

The protein belongs to the ribose 5-phosphate isomerase family. In terms of assembly, homodimer.

It carries out the reaction aldehydo-D-ribose 5-phosphate = D-ribulose 5-phosphate. Its pathway is carbohydrate degradation; pentose phosphate pathway; D-ribose 5-phosphate from D-ribulose 5-phosphate (non-oxidative stage): step 1/1. In terms of biological role, catalyzes the reversible conversion of ribose-5-phosphate to ribulose 5-phosphate. This Legionella pneumophila subsp. pneumophila (strain Philadelphia 1 / ATCC 33152 / DSM 7513) protein is Ribose-5-phosphate isomerase A.